A 353-amino-acid polypeptide reads, in one-letter code: MGCGMSTEEKEGKARNEEIENQLKRDRLQQRNEIKMLLLGAGESGKSTILKQMKLIHEGGYSRDERESFKEIIFSNTVQSMRVILEAMESLELPLEDQRMEYHVQTIFMQPAQIEGDVLPPEVGNAIEALWKDRGVQECFKRSREYQLNDSARYYFDNIARIAAPDYMPNDQDVLRSRVKTTGITETTFIIGDLTYRMFDVGGQRSERKKWIHCFENVTTILFLVAISEYDQLLFEDETVNRMQEALTLFDSICNSRWFIKTSIILFLNKIDRFKEKLPISPMKNYFPDYEGGDDYAAACDYILNRFVSLNQHETKQIYTHFTCATDTTQIRFVMAAVNDIIIQENLRLCGLI.

The disordered stretch occupies residues 1 to 21 (MGCGMSTEEKEGKARNEEIEN). G2 is lipidated: N-myristoyl glycine. C3 carries S-palmitoyl cysteine lipidation. Over residues 7–21 (TEEKEGKARNEEIEN) the composition is skewed to basic and acidic residues. Residues 32 to 353 (NEIKMLLLGA…QENLRLCGLI (322 aa)) enclose the G-alpha domain. A G1 motif region spans residues 35 to 48 (KMLLLGAGESGKST). Residues E43, S44, G45, K46, S47, T48, D150, L175, T181, G203, N269, K270, D272, and A325 each coordinate GTP. S47 lines the Mg(2+) pocket. A G2 motif region spans residues 173 to 181 (DVLRSRVKT). T181 contributes to the Mg(2+) binding site. A G3 motif region spans residues 196–205 (YRMFDVGGQR). The interval 265 to 272 (ILFLNKID) is G4 motif. The tract at residues 323–328 (TCATDT) is G5 motif.

This sequence belongs to the G-alpha family. G(q) subfamily. In terms of assembly, g proteins are composed of 3 units; alpha, beta and gamma. The alpha chain contains the guanine nucleotide binding site. It depends on Mg(2+) as a cofactor.

Guanine nucleotide-binding proteins (G proteins) are involved as modulators or transducers in various transmembrane signaling systems. Plays a role in pathogenicity, specifically in appressorium formation in rice blast disease. Also involved in mating. The chain is Guanine nucleotide-binding protein subunit alpha (MAGB) from Pyricularia oryzae (strain 70-15 / ATCC MYA-4617 / FGSC 8958) (Rice blast fungus).